Here is an 813-residue protein sequence, read N- to C-terminus: Nuclear pore complex protein 5 (813 aa).

It belongs to the nucleoporin Nup84/Nup107 family. Part of the nuclear pore complex (NPC). May interact with mdf-1.

Its subcellular location is the nucleus. It is found in the nuclear pore complex. The protein localises to the chromosome. The protein resides in the centromere. It localises to the kinetochore. Its subcellular location is the nucleus membrane. Its function is as follows. Involved in kinetochore assembly and chromosome segregation during embryonic mitosis. Required for the localization of the NDC80 complex member him-10, the chromosomal passenger complex component air-2 and nuclear pore complex proteins npp-23 and npp-15 to kinetochores during metaphase. Required for npp-23 localization to the nuclear envelope during interphase. Recruits mdf-1, a component of the spindle assembly checkpoint, to the nuclear envelope. Appears dispensable for the assembly of the nuclear pore complex and for nuclear protein import. The chain is Nuclear pore complex protein 5 from Caenorhabditis elegans.